Consider the following 320-residue polypeptide: Protein U25 (320 aa).

The protein belongs to the herpesviridae US22 family.

The chain is Protein U25 (U25) from Human herpesvirus 7 (strain JI) (HHV-7).